A 414-amino-acid polypeptide reads, in one-letter code: Multifunctional CCA protein (414 aa).

Gly-8 and Arg-11 together coordinate ATP. CTP-binding residues include Gly-8 and Arg-11. Positions 21 and 23 each coordinate Mg(2+). Positions 91, 137, and 140 each coordinate ATP. 3 residues coordinate CTP: Arg-91, Arg-137, and Arg-140. The region spanning 226–327 is the HD domain; that stretch reads TGVHVMMVVD…VTLFERCDAF (102 aa).

This sequence belongs to the tRNA nucleotidyltransferase/poly(A) polymerase family. Bacterial CCA-adding enzyme type 1 subfamily. Monomer. Can also form homodimers and oligomers. The cofactor is Mg(2+). Ni(2+) is required as a cofactor.

The enzyme catalyses a tRNA precursor + 2 CTP + ATP = a tRNA with a 3' CCA end + 3 diphosphate. The catalysed reaction is a tRNA with a 3' CCA end + 2 CTP + ATP = a tRNA with a 3' CCACCA end + 3 diphosphate. In terms of biological role, catalyzes the addition and repair of the essential 3'-terminal CCA sequence in tRNAs without using a nucleic acid template. Adds these three nucleotides in the order of C, C, and A to the tRNA nucleotide-73, using CTP and ATP as substrates and producing inorganic pyrophosphate. tRNA 3'-terminal CCA addition is required both for tRNA processing and repair. Also involved in tRNA surveillance by mediating tandem CCA addition to generate a CCACCA at the 3' terminus of unstable tRNAs. While stable tRNAs receive only 3'-terminal CCA, unstable tRNAs are marked with CCACCA and rapidly degraded. This Herminiimonas arsenicoxydans protein is Multifunctional CCA protein.